A 182-amino-acid chain; its full sequence is MSIELIIGPMFSGKTTELMRKINRYILSNQKCVIITHNIDNRFINKNIINHDGNILNKEYLYIKTNNLINEINIVDNYDIIGIDECQFFEENDLEQFCDKMANNKKKVIVAGLNCDFNRNIFNSISKLIPKVEKIKKLQAICQFCYKDASFTIKKHNKNQIIEIGGQDLYVPVCRLCYNNSY.

8–15 serves as a coordination point for ATP; it reads GPMFSGKT. The active-site Proton acceptor is the glutamate 85. Phenylalanine 117 contacts substrate. Positions 142 and 145 each coordinate Zn(2+). 161–165 contacts substrate; that stretch reads IIEIG. Cysteine 174 and cysteine 177 together coordinate Zn(2+).

Belongs to the thymidine kinase family.

It catalyses the reaction thymidine + ATP = dTMP + ADP + H(+). The protein is Thymidine kinase (TK) of Amsacta moorei entomopoxvirus (AmEPV).